The primary structure comprises 173 residues: Photosystem I assembly protein Ycf3 (173 aa).

TPR repeat units lie at residues 35-68 (AYVY…ETDP), 72-105 (GETL…NPKQ), and 120-153 (GRIA…NPGG).

This sequence belongs to the Ycf3 family.

The protein localises to the cellular thylakoid membrane. Its function is as follows. Essential for the assembly of the photosystem I (PSI) complex. May act as a chaperone-like factor to guide the assembly of the PSI subunits. In Synechococcus sp. (strain CC9902), this protein is Photosystem I assembly protein Ycf3.